A 488-amino-acid polypeptide reads, in one-letter code: UDP-N-acetylmuramoyl-L-alanyl-D-glutamate--2,6-diaminopimelate ligase (488 aa).

Ser29 contributes to the UDP-N-acetyl-alpha-D-muramoyl-L-alanyl-D-glutamate binding site. 108-114 (GTSGKTS) contributes to the ATP binding site. UDP-N-acetyl-alpha-D-muramoyl-L-alanyl-D-glutamate-binding positions include 150-151 (TT), Ser177, Gln183, and Arg185. Lys217 is modified (N6-carboxylysine). Meso-2,6-diaminopimelate is bound by residues Arg381, 405-408 (DNPR), Gly453, and Glu457. The short motif at 405–408 (DNPR) is the Meso-diaminopimelate recognition motif element.

It belongs to the MurCDEF family. MurE subfamily. The cofactor is Mg(2+). In terms of processing, carboxylation is probably crucial for Mg(2+) binding and, consequently, for the gamma-phosphate positioning of ATP.

The protein localises to the cytoplasm. The enzyme catalyses UDP-N-acetyl-alpha-D-muramoyl-L-alanyl-D-glutamate + meso-2,6-diaminopimelate + ATP = UDP-N-acetyl-alpha-D-muramoyl-L-alanyl-gamma-D-glutamyl-meso-2,6-diaminopimelate + ADP + phosphate + H(+). The protein operates within cell wall biogenesis; peptidoglycan biosynthesis. Its function is as follows. Catalyzes the addition of meso-diaminopimelic acid to the nucleotide precursor UDP-N-acetylmuramoyl-L-alanyl-D-glutamate (UMAG) in the biosynthesis of bacterial cell-wall peptidoglycan. This is UDP-N-acetylmuramoyl-L-alanyl-D-glutamate--2,6-diaminopimelate ligase from Brucella melitensis biotype 1 (strain ATCC 23456 / CCUG 17765 / NCTC 10094 / 16M).